Consider the following 339-residue polypeptide: Glycerol-3-phosphate dehydrogenase [NAD(P)+] (339 aa).

NADPH is bound by residues Ser-15, Tyr-16, His-36, and Lys-110. Residues Lys-110, Gly-139, and Thr-141 each coordinate sn-glycerol 3-phosphate. Ala-143 is a binding site for NADPH. Residues Lys-195, Asp-248, Ser-258, Arg-259, and Asn-260 each contribute to the sn-glycerol 3-phosphate site. Lys-195 (proton acceptor) is an active-site residue. NADPH is bound at residue Arg-259. Positions 283 and 285 each coordinate NADPH.

Belongs to the NAD-dependent glycerol-3-phosphate dehydrogenase family.

Its subcellular location is the cytoplasm. The catalysed reaction is sn-glycerol 3-phosphate + NAD(+) = dihydroxyacetone phosphate + NADH + H(+). The enzyme catalyses sn-glycerol 3-phosphate + NADP(+) = dihydroxyacetone phosphate + NADPH + H(+). The protein operates within membrane lipid metabolism; glycerophospholipid metabolism. Functionally, catalyzes the reduction of the glycolytic intermediate dihydroxyacetone phosphate (DHAP) to sn-glycerol 3-phosphate (G3P), the key precursor for phospholipid synthesis. This chain is Glycerol-3-phosphate dehydrogenase [NAD(P)+], found in Escherichia coli O17:K52:H18 (strain UMN026 / ExPEC).